The chain runs to 1856 residues: DNA-directed RNA polymerase II subunit RPB1 (1856 aa).

The Zn(2+) site is built by cysteine 66, cysteine 69, cysteine 76, histidine 79, cysteine 106, cysteine 109, cysteine 149, and cysteine 177. The interval 256–268 (PAVVTFGSAKNQD) is lid loop. The tract at residues 314-331 (NCIPGLPTATQKGGRPLK) is rudder loop. Mg(2+) is bound by residues aspartate 489, aspartate 491, and aspartate 493. Positions 827–839 (PSEFFFHAMGGRE) are bridging helix. Lysine 1260 is covalently cross-linked (Glycyl lysine isopeptide (Lys-Gly) (interchain with G-Cter in ubiquitin)). The tract at residues 1523–1856 (PTTGGMSPGA…PSSPTYDPNS (334 aa)) is disordered. Residues 1587–1856 (SMTSPHYSPT…PSSPTYDPNS (270 aa)) show a composition bias toward low complexity. A run of 27 repeats spans residues 1593-1599 (YSPTSPS), 1600-1606 (YSPTSPA), 1616-1622 (YSPTSPS), 1623-1629 (YSPTSPS), 1630-1636 (YSPTSPS), 1637-1643 (YSPTSPS), 1644-1650 (YSPTSPS), 1651-1657 (YSPTSPS), 1658-1664 (YSPSSPS), 1665-1671 (YSPSSPS), 1672-1678 (YSPSSPR), 1679-1685 (YSPTSPT), 1686-1692 (YSPTSPT), 1693-1699 (YSPTSPT), 1700-1706 (YSPTSPT), 1707-1713 (YSPTSPS), 1720-1726 (YSPSSPK), 1727-1733 (YSPSSPT), 1734-1740 (YSPTSPS), 1741-1747 (YSPTSPQ), 1748-1754 (YSPTSPQ), 1755-1761 (YSPSSPT), 1769-1775 (YNPTSPR), 1782-1788 (YSPTSPT), 1789-1795 (YSPTSPS), 1796-1802 (YTPSSPQ), and 1803-1809 (YSPTSPT). The C-terminal domain (CTD); 28 X 7 AA approximate tandem repeats of Y-[ST]-P-[ST]-S-P-[AGKNQRST] stretch occupies residues 1593-1816 (YSPTSPSYSP…SPTYTPSPSE (224 aa)). A 28; approximate repeat occupies 1810-1816 (YTPSPSE).

It belongs to the RNA polymerase beta' chain family. Component of the RNA polymerase II (Pol II) complex consisting of 12 subunits. Interacts with sig-7. In terms of processing, the tandem 7 residues repeats in the C-terminal domain (CTD) can be highly phosphorylated. The phosphorylation activates Pol II. Phosphorylation occurs mainly at residues 'Ser-2' and 'Ser-5' of the heptapeptide repeat and starts at the 3- to 4-cell embryonic stage. This phosphorylation also occurs in the early stages of oocyte development and is not detected in oocytes arrested at the meiotic diakinesis stage. In the somatic lineage, phosphorylation at 'Ser-2' is mediated by cdk-12 downstream of cdk-9 whereas in the germline lineage cdk-12 phosphorylates 'Ser-2' independently of cdk-9. Phosphorylation is likely mediated by cdk-7. May be dephosphorylated by fcp-1 in diakinetic oocytes and in 1-cell and 2-cell embryos. Dephosphorylated at 'Ser-5' of the heptapeptide repeats by ssup-72. The phosphorylation state is believed to result from the balanced action of site-specific CTD kinases and phosphatase, and a 'CTD code' that specifies the position of Pol II within the transcription cycle has been proposed. Following transcription stress, the elongating form of RNA polymerase II (RNA pol IIo) is polyubiquitinated via 'Lys-63'-linkages on Lys-1260 at DNA damage sites without leading to degradation: ubiquitination promotes RNA pol IIo backtracking to allow access by the transcription-coupled nucleotide excision repair (TC-NER) machinery. Subsequent DEF1-dependent polyubiquitination by the elongin complex via 'Lys-48'-linkages may lead to proteasome-mediated degradation; presumably at stalled RNA pol II where TC-NER has failed, to halt global transcription and enable 'last resort' DNA repair pathways.

The protein localises to the nucleus. Its subcellular location is the chromosome. The enzyme catalyses RNA(n) + a ribonucleoside 5'-triphosphate = RNA(n+1) + diphosphate. Functionally, DNA-dependent RNA polymerase catalyzes the transcription of DNA into RNA using the four ribonucleoside triphosphates as substrates. Largest and catalytic component of RNA polymerase II which synthesizes mRNA precursors and many functional non-coding RNAs. Forms the polymerase active center together with the second largest subunit. Pol II is the central component of the basal RNA polymerase II transcription machinery. It is composed of mobile elements that move relative to each other. RPB1 is part of the core element with the central large cleft, the clamp element that moves to open and close the cleft and the jaws that are thought to grab the incoming DNA template. At the start of transcription, a single-stranded DNA template strand of the promoter is positioned within the central active site cleft of Pol II. A bridging helix emanates from RPB1 and crosses the cleft near the catalytic site and is thought to promote translocation of Pol II by acting as a ratchet that moves the RNA-DNA hybrid through the active site by switching from straight to bent conformations at each step of nucleotide addition. During transcription elongation, Pol II moves on the template as the transcript elongates. Elongation is influenced by the phosphorylation status of the C-terminal domain (CTD) of Pol II largest subunit (RPB1), which serves as a platform for assembly of factors that regulate transcription initiation, elongation, termination and mRNA processing. Involved in the transcription of several genes including those involved in embryogenesis. The sequence is that of DNA-directed RNA polymerase II subunit RPB1 from Caenorhabditis elegans.